Consider the following 598-residue polypeptide: MSHEGSRQARDRGVTRSKAEKARPPTQPVPQVDIVPGRLNEAEWIAFMSLEEGEDVVGDILADLMTRVMECAFKVYLTQQCVPFTISQAREAMLQITEWRFLARDEGESAVAEDPTWGEDEEPLACTTDSWAQGSVPVLHTPAPVCVEEQFHNEEPGNPDQFLLGSSWDKESQKPTQPSEPSAEPKVTPRPTATLEAFEEAEPGDALEVPHGQEGSHMLAVPSKESLRSTAEGERVYSPQSSLKQPQVVRLQASEKESSFGSHLSLEDLYLCMPQPDAAGDRLSLQSKGQLHSSPIGSESHLGALTPAEPSAFQEPEVLGERPKHKTTTLRMDSSRLPRHWVRPVAEVLIPDLEVHPLEIYRGRPRRSQAGTATSACESQALSSRAPSKPHVSSPRFPLQRCATFRALGPDPSLNLAQTSPSFGSNVPFLSPGFRFLPRNPIPPDVASTPTPKLWPLAKWPSGWEREAEQLGELWAGRTRVPPQGQEPVEVTPLEEDSGWPLAAPQVLEATSQVLWKPMVISETMKLVPGVSMWNRGTQELLNPAVIRKEAEEGTPQAPEQQPIQTGVSKPQVIMKQIRNETPKAWLLPTKPVPHSGS.

Basic and acidic residues predominate over residues 1 to 23 (MSHEGSRQARDRGVTRSKAEKAR). Disordered regions lie at residues 1 to 32 (MSHE…VPQV), 151 to 190 (FHNE…VTPR), and 222 to 241 (PSKE…SPQS). Basic and acidic residues predominate over residues 225–235 (ESLRSTAEGER). 2 positions are modified to phosphoserine: S238 and S242. Disordered regions lie at residues 366 to 396 (RRSQ…SSPR) and 551 to 571 (AEEG…VSKP). Composition is skewed to polar residues over residues 369-386 (QAGT…SSRA) and 558-569 (APEQQPIQTGVS).

This is an uncharacterized protein from Mus musculus (Mouse).